We begin with the raw amino-acid sequence, 763 residues long: Xaa-Pro dipeptidyl-peptidase (763 aa).

Active-site charge relay system residues include serine 348, aspartate 468, and histidine 498.

It belongs to the peptidase S15 family. In terms of assembly, homodimer.

It localises to the cytoplasm. The enzyme catalyses Hydrolyzes Xaa-Pro-|- bonds to release unblocked, N-terminal dipeptides from substrates including Ala-Pro-|-p-nitroanilide and (sequentially) Tyr-Pro-|-Phe-Pro-|-Gly-Pro-|-Ile.. Removes N-terminal dipeptides sequentially from polypeptides having unsubstituted N-termini provided that the penultimate residue is proline. This is Xaa-Pro dipeptidyl-peptidase (pepX) from Lactococcus lactis subsp. cremoris (Streptococcus cremoris).